Here is a 360-residue protein sequence, read N- to C-terminus: Phospho-N-acetylmuramoyl-pentapeptide-transferase (360 aa).

The next 10 membrane-spanning stretches (helical) occupy residues 21 to 41 (YVTF…LWWG), 74 to 94 (MGGL…GDLG), 97 to 117 (YVWV…IDDY), 134 to 154 (YILQ…SAGS), 168 to 188 (VMPQ…VGSS), 199 to 219 (GLAI…AYLS), 236 to 256 (SGEL…FLWF), 263 to 283 (VFMG…IAVL), 288 to 308 (ILLV…ILQV), and 338 to 358 (VIVR…ATLK).

It belongs to the glycosyltransferase 4 family. MraY subfamily. It depends on Mg(2+) as a cofactor.

It is found in the cell inner membrane. The catalysed reaction is UDP-N-acetyl-alpha-D-muramoyl-L-alanyl-gamma-D-glutamyl-meso-2,6-diaminopimeloyl-D-alanyl-D-alanine + di-trans,octa-cis-undecaprenyl phosphate = di-trans,octa-cis-undecaprenyl diphospho-N-acetyl-alpha-D-muramoyl-L-alanyl-D-glutamyl-meso-2,6-diaminopimeloyl-D-alanyl-D-alanine + UMP. It functions in the pathway cell wall biogenesis; peptidoglycan biosynthesis. Functionally, catalyzes the initial step of the lipid cycle reactions in the biosynthesis of the cell wall peptidoglycan: transfers peptidoglycan precursor phospho-MurNAc-pentapeptide from UDP-MurNAc-pentapeptide onto the lipid carrier undecaprenyl phosphate, yielding undecaprenyl-pyrophosphoryl-MurNAc-pentapeptide, known as lipid I. The protein is Phospho-N-acetylmuramoyl-pentapeptide-transferase of Shewanella loihica (strain ATCC BAA-1088 / PV-4).